Here is a 124-residue protein sequence, read N- to C-terminus: Large ribosomal subunit protein bL12 (124 aa).

Belongs to the bacterial ribosomal protein bL12 family. In terms of assembly, homodimer. Part of the ribosomal stalk of the 50S ribosomal subunit. Forms a multimeric L10(L12)X complex, where L10 forms an elongated spine to which 2 to 4 L12 dimers bind in a sequential fashion. Binds GTP-bound translation factors.

Functionally, forms part of the ribosomal stalk which helps the ribosome interact with GTP-bound translation factors. Is thus essential for accurate translation. This is Large ribosomal subunit protein bL12 from Azobacteroides pseudotrichonymphae genomovar. CFP2.